The primary structure comprises 423 residues: MMTSTDLDALMTDLGQRARKAARILALTPSAAKDKALRAAAQAIRIDTKLILAANAKDMEAGEAKGLSKAMLDRLMLNPARVEAMAKGLEDIARLPDPVGRSLAEWTRPNGMSIARIAVPLGVIGIIYESRPNVTADAAALCLKSGNATILRGGSESFHSSQAILTALKGGFTACGLPADAVQMVPTTDRAAVGVMLRLSNYIDVIVPRGGKSLVERVVAESRIPLFQHLEGICHTYVDGSADLEMAKTIVLNAKMRRTGICGATETLLVDRACAGTHLAPLVAMLIDAGCEVRGDAVAQAADARVIPASDADWSTEYLDAIISVGVVDGVGAAVEHINTHGSHHTEAIVAEDSQVAETFLNGCDSAIVLWNASTQFADGGEFGMGAEIGISTGKMHARGPVGVEQLCTFKYVVKGNGQVRPG.

Belongs to the gamma-glutamyl phosphate reductase family.

Its subcellular location is the cytoplasm. It carries out the reaction L-glutamate 5-semialdehyde + phosphate + NADP(+) = L-glutamyl 5-phosphate + NADPH + H(+). It functions in the pathway amino-acid biosynthesis; L-proline biosynthesis; L-glutamate 5-semialdehyde from L-glutamate: step 2/2. In terms of biological role, catalyzes the NADPH-dependent reduction of L-glutamate 5-phosphate into L-glutamate 5-semialdehyde and phosphate. The product spontaneously undergoes cyclization to form 1-pyrroline-5-carboxylate. This chain is Gamma-glutamyl phosphate reductase, found in Paramagnetospirillum magneticum (strain ATCC 700264 / AMB-1) (Magnetospirillum magneticum).